The sequence spans 53 residues: Large ribosomal subunit protein eL40 (53 aa).

It belongs to the eukaryotic ribosomal protein eL40 family.

The chain is Large ribosomal subunit protein eL40 from Pyrobaculum aerophilum (strain ATCC 51768 / DSM 7523 / JCM 9630 / CIP 104966 / NBRC 100827 / IM2).